Consider the following 203-residue polypeptide: Cytochrome c biogenesis CcmF N-terminal-like mitochondrial protein 2 (203 aa).

2 consecutive transmembrane segments (helical) span residues 44 to 64 (IWIL…SWWA) and 143 to 163 (IFLW…FYQM).

The protein belongs to the CcmF/CycK/Ccl1/NrfE/CcsA family. As to quaternary structure, interacts with CCMFC, CCMFN1, CCMH and CYTC-1.

Its subcellular location is the mitochondrion inner membrane. Forms a complex with CCMFC, CCMFN1 and CCMH that performs the assembly of heme with c-type apocytochromes in mitochondria. The polypeptide is Cytochrome c biogenesis CcmF N-terminal-like mitochondrial protein 2 (Arabidopsis thaliana (Mouse-ear cress)).